The primary structure comprises 506 residues: Vinckepain-1 (506 aa).

At 1–32 (MSDNIGQINFTIPGIQSLDENDTYLKINHKKT) the chain is on the cytoplasmic side. A propeptide spans 1 to 262 (MSDNIGQINF…LISVDNKSKD (262 aa)) (activation peptide). A helical; Signal-anchor for type II membrane protein transmembrane segment spans residues 33–53 (IKICAYAITAIALFFIGGVFF). The Lumenal segment spans residues 54 to 506 (KNQAKINALD…VGSDVFFPIY (453 aa)). Residues Asn-133 and Asn-258 are each glycosylated (N-linked (GlcNAc...) asparagine). 4 cysteine pairs are disulfide-bonded: Cys-284–Cys-326, Cys-319–Cys-359, Cys-344–Cys-364, and Cys-413–Cys-495. Residue Cys-287 is part of the active site. N-linked (GlcNAc...) asparagine glycosylation occurs at Asn-418. Residues His-419 and Asn-470 contribute to the active site.

It belongs to the peptidase C1 family.

The protein resides in the membrane. Functionally, cysteine protease. This Plasmodium vinckei protein is Vinckepain-1.